The primary structure comprises 117 residues: MQKSCDENEGTPQNTPKADEGHPSEDPPQQAGETLQASGENVREETEGSHRGEPAEPSPEPKEDTPARHLNPEEVIRGVDELERLREEIRRVRNKFVLMHWKQRHSRSRPYPVCFRP.

The segment at Met-1–Leu-82 is disordered. The span at Asn-41–Leu-82 shows a compositional bias: basic and acidic residues. Residues Glu-73–His-100 adopt a coiled-coil conformation.

The protein belongs to the TFS-II family. TFA subfamily.

Its subcellular location is the nucleus. Its function is as follows. May be involved in transcriptional regulation. This is Transcription elongation factor A protein-like 8 (Tceal8) from Mus musculus (Mouse).